Reading from the N-terminus, the 74-residue chain is Conotoxin Vc6.8 (74 aa).

Positions 1–19 (MEKLTILLLVAAVLMSTQA) are cleaved as a signal peptide. Positions 20 to 34 (LMQEQRQKAKINLFS) are excised as a propeptide. 3 cysteine pairs are disulfide-bonded: C49/C62, C55/C66, and C61/C70.

Belongs to the conotoxin O2 superfamily. As to expression, expressed by the venom duct.

It localises to the secreted. Its function is as follows. Inhibits voltage-gated ion channels. In Conus victoriae (Queen Victoria cone), this protein is Conotoxin Vc6.8.